The chain runs to 1238 residues: Protein translocase subunit SecA 1 (1238 aa).

ATP-binding positions include Gln-107, 125–129, and Asp-570; that span reads GEGKT. The segment at 1194–1220 is disordered; sequence AAGSEGRAEGSVDTVRVEEPRIGRNAP. The span at 1199-1215 shows a compositional bias: basic and acidic residues; that stretch reads GRAEGSVDTVRVEEPRI. Cys-1221, Cys-1223, Cys-1232, and Cys-1233 together coordinate Zn(2+).

It belongs to the SecA family. In terms of assembly, monomer and homodimer. Part of the essential Sec protein translocation apparatus which comprises SecA, SecYEG and auxiliary proteins SecDF. Other proteins may also be involved. Requires Zn(2+) as cofactor.

Its subcellular location is the cell inner membrane. It is found in the cytoplasm. The catalysed reaction is ATP + H2O + cellular proteinSide 1 = ADP + phosphate + cellular proteinSide 2.. In terms of biological role, part of the Sec protein translocase complex. Interacts with the SecYEG preprotein conducting channel. Has a central role in coupling the hydrolysis of ATP to the transfer of proteins into and across the cell membrane, serving as an ATP-driven molecular motor driving the stepwise translocation of polypeptide chains across the membrane. The sequence is that of Protein translocase subunit SecA 1 from Rhodopirellula baltica (strain DSM 10527 / NCIMB 13988 / SH1).